The primary structure comprises 190 residues: 3-isopropylmalate dehydratase small subunit (190 aa).

Belongs to the LeuD family. LeuD type 1 subfamily. Heterodimer of LeuC and LeuD.

It catalyses the reaction (2R,3S)-3-isopropylmalate = (2S)-2-isopropylmalate. The protein operates within amino-acid biosynthesis; L-leucine biosynthesis; L-leucine from 3-methyl-2-oxobutanoate: step 2/4. In terms of biological role, catalyzes the isomerization between 2-isopropylmalate and 3-isopropylmalate, via the formation of 2-isopropylmaleate. The protein is 3-isopropylmalate dehydratase small subunit of Staphylococcus aureus (strain USA300).